We begin with the raw amino-acid sequence, 174 residues long: Dehydratase AgnL8 (174 aa).

3 residues coordinate substrate: tyrosine 24, tyrosine 44, and phenylalanine 47. Catalysis depends on residues histidine 79 and histidine 104.

It belongs to the scytalone dehydratase family. In terms of assembly, homotrimer. Each subunit contains an active site, located in the central part of the hydrophobic core of the monomer, which functions independently.

It participates in secondary metabolite biosynthesis. Its function is as follows. Dehydratase; part of the gene cluster that mediates the biosynthesis of agnestins, dihydroxy-xanthone metabolites. The pathway begins with the assembly and cyclization of atrochrysone thioester by the non-reducing polyketide synthase Agnpks1. The atrochrysone carboxyl ACP thioesterase AgnL7 then breaks the thioester bond and releases the atrochrysone carboxylic acid as the first enzyme-free intermediate. The decarboxylase AgnL1 then catalyzes the concerted decarboxylation-elimination required to convert atochrysone carboxylic acid into emodin anthrone, which is further oxidized to emodin by the anthrone oxygenase AgnL2. Emodin then undergoes reduction catalyzed by the oxidoreductase AgnL4 to yield the dihydroquinone tautomer which is the substrate for reduction by the short chain dehydrogenase AgnL6 reduction to produce hydroxyketone, followed by AgnL8 dehydration and likely spontaneous autoxidation to chrysophanol. Baeyer-Villiger oxidation by the oxidase AgnL3 leads to monodictyphenone via cleavage of the C-10/C-10a bond of chrysophanol. Alternative cleavage at the C-4a/C-10 bond of chrysophanol also leads to the formation some cephalone F. Further conversion to agnestins A and B, requires reduction to dihydro-monodictyphenone, oxidation to agnestin C probably via an epoxide, and rearrangement to either agnestin A or agnestin B directly, although agnestin A or agnestin B can also interconvert. Within the cluster, AgnR1 is the only unassigned oxidoreductase present which could be involved in this conversion. However, AgnR1 seems not to be involved in this step, and thus genes involved in the proposed oxidation/reduction may be located elsewhere on the genome. Further agnestin A derivatives are probably formed by spontaneous decarboxylations, dehydrations and methanolysis reactions. This chain is Dehydratase AgnL8, found in Paecilomyces divaricatus (Penicillium divaricatum).